The following is a 188-amino-acid chain: Potassium-transporting ATPase KdpC subunit (188 aa).

A helical transmembrane segment spans residues 13–33 (MTAIFWIGCGLAYPLIFTGFA).

It belongs to the KdpC family. The system is composed of three essential subunits: KdpA, KdpB and KdpC.

It is found in the cell inner membrane. In terms of biological role, part of the high-affinity ATP-driven potassium transport (or Kdp) system, which catalyzes the hydrolysis of ATP coupled with the electrogenic transport of potassium into the cytoplasm. This subunit acts as a catalytic chaperone that increases the ATP-binding affinity of the ATP-hydrolyzing subunit KdpB by the formation of a transient KdpB/KdpC/ATP ternary complex. This chain is Potassium-transporting ATPase KdpC subunit, found in Gloeobacter violaceus (strain ATCC 29082 / PCC 7421).